Consider the following 314-residue polypeptide: Nodulation protein D 1 (314 aa).

The region spanning 6–63 (LDLNLLVALDALMTERNLTAAARKIHLSQPAMSAAVARLRTYFGDELFTMRGRELVPT) is the HTH lysR-type domain. The H-T-H motif DNA-binding region spans 23 to 42 (LTAAARKIHLSQPAMSAAVA).

The protein belongs to the LysR transcriptional regulatory family.

Functionally, nodD regulates the expression of the nodABCFE genes which encode other nodulation proteins. NodD is also a negative regulator of its own expression. Binds flavonoids as inducers. The chain is Nodulation protein D 1 (nodD1) from Bradyrhizobium sp. (strain NC92).